We begin with the raw amino-acid sequence, 320 residues long: Lipoyl synthase (320 aa).

Cys67, Cys72, Cys78, Cys93, Cys97, Cys100, and Ser307 together coordinate [4Fe-4S] cluster. The 218-residue stretch at 79-296 (FNHGTATFMI…RDKANEMGFE (218 aa)) folds into the Radical SAM core domain.

Belongs to the radical SAM superfamily. Lipoyl synthase family. [4Fe-4S] cluster serves as cofactor.

The protein resides in the cytoplasm. The enzyme catalyses [[Fe-S] cluster scaffold protein carrying a second [4Fe-4S](2+) cluster] + N(6)-octanoyl-L-lysyl-[protein] + 2 oxidized [2Fe-2S]-[ferredoxin] + 2 S-adenosyl-L-methionine + 4 H(+) = [[Fe-S] cluster scaffold protein] + N(6)-[(R)-dihydrolipoyl]-L-lysyl-[protein] + 4 Fe(3+) + 2 hydrogen sulfide + 2 5'-deoxyadenosine + 2 L-methionine + 2 reduced [2Fe-2S]-[ferredoxin]. It participates in protein modification; protein lipoylation via endogenous pathway; protein N(6)-(lipoyl)lysine from octanoyl-[acyl-carrier-protein]: step 2/2. In terms of biological role, catalyzes the radical-mediated insertion of two sulfur atoms into the C-6 and C-8 positions of the octanoyl moiety bound to the lipoyl domains of lipoate-dependent enzymes, thereby converting the octanoylated domains into lipoylated derivatives. The sequence is that of Lipoyl synthase from Haemophilus influenzae (strain PittGG).